A 309-amino-acid chain; its full sequence is Probable ABC transporter permease protein YesP (309 aa).

The next 6 membrane-spanning stretches (helical) occupy residues 29 to 49, 84 to 104, 114 to 134, 167 to 187, 217 to 237, and 275 to 295; these read FIIG…FLSF, FTYV…IAVI, IYRT…VAIM, ALWT…LIFL, LPIL…SAFM, and YASA…LILF. The 215-residue stretch at 80 to 294 folds into the ABC transmembrane type-1 domain; the sequence is LKVTFTYVLA…VIVGLITLIL (215 aa).

Belongs to the binding-protein-dependent transport system permease family. MalFG subfamily.

The protein resides in the cell membrane. Its function is as follows. Part of a binding-protein-dependent transport system. Probably responsible for the translocation of the substrate across the membrane. In Bacillus subtilis (strain 168), this protein is Probable ABC transporter permease protein YesP (yesP).